The sequence spans 93 residues: Stromal cell-derived factor 1 (93 aa).

An N-terminal signal peptide occupies residues Met1 to Gly21. The Receptor activation motif motif lies at Lys22–Pro23. Residues Arg29–Arg33 are receptor and heparin binding. 2 cysteine pairs are disulfide-bonded: Cys30-Cys55 and Cys32-Cys71. Receptor binding stretches follow at residues Ile39–Arg41, Lys48–Leu50, and Val60–Val70. Residues Arg41–Asn51, Arg62, Gln69, and Lys85 contribute to the heparin site.

The protein belongs to the intercrine alpha (chemokine CxC) family. As to quaternary structure, monomer or homodimer; in equilibrium. Dimer formation is induced by non acidic pH and the presence of multivalent anions, and by binding to CXCR4 or heparin. Monomeric form is required for full chemotactic activity and resistance to ischemia/reperfusion injury, whereas the dimeric form acts as a partial agonist of CXCR4, stimulating Ca2+ mobilization but with no chemotactic activity and instead acts as a selective antagonist that blocks chemotaxis induced by the monomeric form. Interacts with the N-terminus of ACKR3. Interacts with integrin subunit ITGB3 (via the allosteric site (site 2)). Interacts with TNFAIP6 (via Link domain). Highest expression levels detected in kidney, liver, spleen and muscle. Isoform Alpha is expressed ubiquitously but at varying levels, while isoform Beta displays tissue-specific expression, with expression detected in kidney, liver, heart, spleen and muscle but not in lung, colon, brain, skin and stomach.

It is found in the secreted. Functionally, chemoattractant active on T-lymphocytes and monocytes but not neutrophils. Activates the C-X-C chemokine receptor CXCR4 to induce a rapid and transient rise in the level of intracellular calcium ions and chemotaxis. Also binds to atypical chemokine receptor ACKR3, which activates the beta-arrestin pathway and acts as a scavenger receptor for SDF-1. Binds to the allosteric site (site 2) of integrins and activates integrins ITGAV:ITGB3, ITGA4:ITGB1 and ITGA5:ITGB1 in a CXCR4-independent manner. Acts as a positive regulator of monocyte migration and a negative regulator of monocyte adhesion via the LYN kinase. Stimulates migration of monocytes and T-lymphocytes through its receptors, CXCR4 and ACKR3, and decreases monocyte adherence to surfaces coated with ICAM-1, a ligand for beta-2 integrins. SDF1A/CXCR4 signaling axis inhibits beta-2 integrin LFA-1 mediated adhesion of monocytes to ICAM-1 through LYN kinase. Plays a protective role after myocardial infarction. Induces down-regulation and internalization of ACKR3 expressed in various cells. Has several critical functions during embryonic development; required for B-cell lymphopoiesis, myelopoiesis in bone marrow and heart ventricular septum formation. Stimulates the proliferation of bone marrow-derived B-cell progenitors in the presence of IL7 as well as growth of stromal cell-dependent pre-B-cells. In Mus musculus (Mouse), this protein is Stromal cell-derived factor 1 (Cxcl12).